Reading from the N-terminus, the 303-residue chain is Thioesterase poxG (303 aa).

It belongs to the lcsJ thioesterase family.

The protein operates within secondary metabolite biosynthesis. Thioesterase; part of the gene cluster that mediates the biosynthesis of oxaleimides, cytotoxic compounds containing an unusual disubstituted succinimide moiety. The first step of the pathway is provided by the HR-PKS poxF that serves in a new mode of collaborative biosynthesis with the PKS-NRPS poxE, by providing the olefin containing amino acid substrate via the synthesis of an ACP-bound dec-4-enoate. The cytochrome P450 monooxygenase poxM-catalyzed oxidation at the alpha-position creates the enzyme-bound 2-hydroxydec-4-enoyl-ACP thioester, which may be prone to spontaneous hydrolysis to yield 2-hydroxydec-4-enoic acid due to increased electrophilicity of the carbonyl. 2-hydroxydec-4-enoic acid can then be further oxidized by poxM to yield the alpha-ketoacid 2-oxodec-4-enoicacid, which is reductively aminated by the aminotransferase poxL to yield (S,E)-2-aminodec-4-enoic acid. The Hybrid PKS-NRPS synthetase poxE then performs condensation between the octaketide product of its PKS modules and the amino group of (S,E)-2-aminodec-4-enoic acid which is activated and incorporated by the adenylation domain. The resulting aminoacyl product can be cyclized by the Diels-Alderase PoxQ and reductively released by the reductive (R) domain of poxE to yield an aldehyde intermediate. The released aldehyde is then substrate for a Knoevenagel condensation by the hydrolyase poxO followed by an oxidation at the 5-position of the pyrrolidone ring. The presence of the olefin from the amino acid building block allows for migration of the substituted allyl group to occur. This allylic transposition reaction takes place in a conjugate addition, semipinacol-like fashion to yield a succinimide intermediate. Iterative two-electron oxidations of the C7 methyl of the succinimide intermediate to the carboxylic acid can be catalyzed by one of two remaining cytochrome P450 monooxygenasess poxC or poxD to yield oxaleimide A. Subsequent oxidation yields the maleimide scaffold oxaleimide I. Both oxaleimide A and oxaleimide I can undergo oxidative modifications in the decalin ring to yield the series of products oxaleimides B to H. This Penicillium oxalicum protein is Thioesterase poxG.